Reading from the N-terminus, the 946-residue chain is Structure-specific endonuclease subunit SLX4 (946 aa).

Residues 1-14 (MPASPLPALSPPAS) are compositionally biased toward pro residues. Disordered regions lie at residues 1-35 (MPAS…IPPD), 54-119 (QHFD…EEAV), 147-318 (PSDE…GGFT), 339-399 (ADSA…AAQL), 416-471 (TKVP…PKHI), 577-748 (FPLL…GSGR), and 765-799 (ALSP…KADS). Over residues 54–74 (QHFDDDIAGKDQEQSRKKSPE) the composition is skewed to basic and acidic residues. Basic residues-rich tracts occupy residues 160–169 (KAGKPRKPRA) and 182–195 (KPKR…KAAK). Over residues 278 to 287 (AVSRRRDWTP) the composition is skewed to basic and acidic residues. Residues 453-469 (SKARSKKASTKAAAKPK) are compositionally biased toward basic residues. A compositionally biased stretch (basic and acidic residues) spans 627-636 (KANDEPDHVM). Positions 707 to 717 (KSQSAIATSGS) are enriched in polar residues. The segment covering 722–733 (KEPKRTKGKEVK) has biased composition (basic and acidic residues).

Belongs to the SLX4 family. Forms a heterodimer with SLX1. In terms of processing, phosphorylated in response to DNA damage.

The protein localises to the nucleus. Functionally, regulatory subunit of the SLX1-SLX4 structure-specific endonuclease that resolves DNA secondary structures generated during DNA repair and recombination. Has endonuclease activity towards branched DNA substrates, introducing single-strand cuts in duplex DNA close to junctions with ss-DNA. In Phaeosphaeria nodorum (strain SN15 / ATCC MYA-4574 / FGSC 10173) (Glume blotch fungus), this protein is Structure-specific endonuclease subunit SLX4.